A 448-amino-acid chain; its full sequence is Glutamyl-tRNA reductase (448 aa).

Substrate contacts are provided by residues 48 to 51 (TCNR), Ser-100, 105 to 107 (EDQ), and Gln-111. Catalysis depends on Cys-49, which acts as the Nucleophile. An NADP(+)-binding site is contributed by 180–185 (GAGEIG).

It belongs to the glutamyl-tRNA reductase family. In terms of assembly, homodimer.

It catalyses the reaction (S)-4-amino-5-oxopentanoate + tRNA(Glu) + NADP(+) = L-glutamyl-tRNA(Glu) + NADPH + H(+). It functions in the pathway porphyrin-containing compound metabolism; protoporphyrin-IX biosynthesis; 5-aminolevulinate from L-glutamyl-tRNA(Glu): step 1/2. Catalyzes the NADPH-dependent reduction of glutamyl-tRNA(Glu) to glutamate 1-semialdehyde (GSA). This is Glutamyl-tRNA reductase from Methanosarcina mazei (strain ATCC BAA-159 / DSM 3647 / Goe1 / Go1 / JCM 11833 / OCM 88) (Methanosarcina frisia).